The following is a 1065-amino-acid chain: Valine--tRNA ligase, mitochondrial (1065 aa).

A mitochondrion-targeting transit peptide spans 1–15 (MPHLPLASFRPPLWG). The tract at residues 27-52 (ALCTQPEPHGSPVSRRNREAKQKRLR) is disordered. The segment covering 42–52 (RNREAKQKRLR) has biased composition (basic and acidic residues). The 'HIGH' region motif lies at 146-156 (PNVTGSLHIGH). Positions 659–663 (KMSKS) match the 'KMSKS' region motif. Lys-662 provides a ligand contact to ATP.

This sequence belongs to the class-I aminoacyl-tRNA synthetase family.

It is found in the mitochondrion. It catalyses the reaction tRNA(Val) + L-valine + ATP = L-valyl-tRNA(Val) + AMP + diphosphate. Functionally, catalyzes the attachment of valine to tRNA(Val) in a two-step reaction: valine is first activated by ATP to form Val-AMP and then transferred to the acceptor end of tRNA(Val). The sequence is that of Valine--tRNA ligase, mitochondrial (Vars2) from Rattus norvegicus (Rat).